The sequence spans 461 residues: Glutamate--tRNA ligase (461 aa).

Positions 8–18 (PSPTGYLHIGG) match the 'HIGH' region motif. Positions 240–244 (KMSKR) match the 'KMSKS' region motif. K243 is an ATP binding site.

It belongs to the class-I aminoacyl-tRNA synthetase family. Glutamate--tRNA ligase type 1 subfamily. Monomer.

Its subcellular location is the cytoplasm. The enzyme catalyses tRNA(Glu) + L-glutamate + ATP = L-glutamyl-tRNA(Glu) + AMP + diphosphate. Its function is as follows. Catalyzes the attachment of glutamate to tRNA(Glu) in a two-step reaction: glutamate is first activated by ATP to form Glu-AMP and then transferred to the acceptor end of tRNA(Glu). The polypeptide is Glutamate--tRNA ligase (Chromobacterium violaceum (strain ATCC 12472 / DSM 30191 / JCM 1249 / CCUG 213 / NBRC 12614 / NCIMB 9131 / NCTC 9757 / MK)).